We begin with the raw amino-acid sequence, 541 residues long: MNGVVIPQTPIAVDFWSLRRAGTARLFFLSHMHCDHTVGLSSTWARPLYCSPITAHLLHRRLQVSKQWIRALEIGESHVLLLDEIGQETMTVTLIDANHCPGSVMFLFEGYFGTILYTGDFRYTPSMLKEPALTLGKQIHTLYLDNTNCNPALVLPSRQEATQQIIQLIRQFPQHNIKIGLYSLGKESLLEQLALEFQTWVVLSPQRLELVQLLGLADVFTVEEEAGRIHAVDHMEICHSAMLQWNQTHPTIAIFPTSRKIRSPHPSIYSIPYSDHSSYSELRAFVAALRPCQVVPIVREQPCGEFFQDSLSPRLSMPLIPHSVQQYMSSSSRKTNVFWQLERRLKRPRTQGVVFESPEEKADQVKVDRDSKKHKKESLSPWAGCLSRLCPHPLQARKQLFPDFCRKEGDEPVLFCDSNKMATVLTAPLELSVQLQPVDEFPFPETREEIGLGSPLWSGGGSGSPTRGKQSNGMGCGSPPTHISRTTHLTPESGGLALKYLLTPVDFLQAGFSSRNFDQQVEKHQRVQCNNPAVMNTVDDV.

Lys334 is covalently cross-linked (Glycyl lysine isopeptide (Lys-Gly) (interchain with G-Cter in SUMO2)). 2 disordered regions span residues 350 to 375 and 450 to 489; these read TQGV…KKHK and IGLG…TTHL. Positions 358 to 371 are enriched in basic and acidic residues; it reads PEEKADQVKVDRDS. A TBM motif is present at residues 492–507; it reads ESGGLALKYLLTPVDF.

Belongs to the DNA repair metallo-beta-lactamase (DRMBL) family. As to quaternary structure, interacts with TERF2; the interaction is direct. Interacts with MUS81, MRE11 and FANCD2. Interacts with HSPA2, HSPA8 and HSPA14. Interacts with SPAG5. Post-translationally, ubiquitinated, leading to its degradation. Interaction with TERF2 protects it from ubiquitination.

The protein localises to the chromosome. Its subcellular location is the telomere. It is found in the nucleus. It localises to the cytoplasm. The protein resides in the cytoskeleton. The protein localises to the microtubule organizing center. Its subcellular location is the centrosome. The enzyme catalyses a beta-lactam + H2O = a substituted beta-amino acid. Its function is as follows. 5'-3' exonuclease that plays a central role in telomere maintenance and protection during S-phase. Participates in the protection of telomeres against non-homologous end-joining (NHEJ)-mediated repair, thereby ensuring that telomeres do not fuse. Plays a key role in telomeric loop (T loop) formation by being recruited by TERF2 at the leading end telomeres and by processing leading-end telomeres immediately after their replication via its exonuclease activity: generates 3' single-stranded overhang at the leading end telomeres avoiding blunt leading-end telomeres that are vulnerable to end-joining reactions and expose the telomere end in a manner that activates the DNA repair pathways. Together with TERF2, required to protect telomeres from replicative damage during replication by controlling the amount of DNA topoisomerase (TOP1, TOP2A and TOP2B) needed for telomere replication during fork passage and prevent aberrant telomere topology. Also involved in response to DNA damage: plays a role in response to DNA interstrand cross-links (ICLs) by facilitating double-strand break formation. In case of spindle stress, involved in prophase checkpoint. Possesses beta-lactamase activity, catalyzing the hydrolysis of penicillin G and nitrocefin. Exhibits no activity towards other beta-lactam antibiotic classes including cephalosporins (cefotaxime) and carbapenems (imipenem). The protein is 5' exonuclease Apollo (Dclre1b) of Rattus norvegicus (Rat).